Reading from the N-terminus, the 98-residue chain is Small ribosomal subunit protein uS19 (98 aa).

The disordered stretch occupies residues threonine 77 to lysine 98.

This sequence belongs to the universal ribosomal protein uS19 family.

Functionally, protein S19 forms a complex with S13 that binds strongly to the 16S ribosomal RNA. This is Small ribosomal subunit protein uS19 from Chlorobium phaeovibrioides (strain DSM 265 / 1930) (Prosthecochloris vibrioformis (strain DSM 265)).